A 128-amino-acid chain; its full sequence is LIM domain-containing protein 2 (128 aa).

Methionine 1 bears the N-acetylmethionine mark. The interval 1–25 (MFQAAGAAQATPSHEAKGGGSSSTV) is disordered. One can recognise an LIM zinc-binding domain in the interval 39–99 (ETCAACQKTV…KPHFQQLFKS (61 aa)). Positions 41, 44, 62, 65, 68, 71, 89, and 92 each coordinate Zn(2+).

In terms of assembly, interacts with ILK.

The protein resides in the cytoplasm. The protein localises to the nucleus. Acts as an activator of the protein-kinase ILK, thereby regulating cell motility. The polypeptide is LIM domain-containing protein 2 (LIMD2) (Bos taurus (Bovine)).